Reading from the N-terminus, the 205-residue chain is Inactive ribonuclease-like protein 9 (205 aa).

The first 24 residues, 1–24 (MMLITTHSLLLLLLLLQLLQPLQF), serve as a signal peptide directing secretion. Cystine bridges form between C97–C152, C115–C167, and C122–C129. N130 and N142 each carry an N-linked (GlcNAc...) asparagine glycan.

The protein belongs to the pancreatic ribonuclease family.

Its subcellular location is the secreted. Does not exhibit any ribonuclease activity. This Cebus capucinus (White-faced sapajou) protein is Inactive ribonuclease-like protein 9 (RNASE9).